Here is a 162-residue protein sequence, read N- to C-terminus: Meiosis-specific protein HED1 (162 aa).

The tract at residues 67-124 (KNLSENTGGGSPNGGAYLDAKKGVREQDQYQGGPSKELDRLQPPPSMKKSPPRKKKSL) is disordered. Basic and acidic residues predominate over residues 85 to 94 (DAKKGVREQD).

Interacts with RAD51.

Its subcellular location is the nucleus. It localises to the chromosome. Its function is as follows. Involved in regulation of meiotic recombination and repair of DNA damage. Inhibits RAD51-mediated recombination when the meiotic recombination machinery is impaired. The protein is Meiosis-specific protein HED1 (HED1) of Saccharomyces cerevisiae (strain ATCC 204508 / S288c) (Baker's yeast).